The chain runs to 539 residues: Gamma-2-syntrophin (539 aa).

The PDZ domain occupies 73–156; it reads TVTLRRQPVG…EVTITVEYLR (84 aa). Composition is skewed to low complexity over residues 168-183 and 194-205; these read SPGP…SSPL and SSTTAPSSPSSP. Positions 168 to 209 are disordered; it reads SPGPSSDHSSGASSPLFDSGLHLNGNSSTTAPSSPSSPIAKD. The PH domain occupies 296–421; it reads QVVHMGWVNE…WEKSFQRATF (126 aa).

The protein belongs to the syntrophin family. In terms of assembly, interacts with the dystrophin protein DMD and related proteins DTNA and DTNB. In terms of tissue distribution, widely expressed. Strong expression in brain and testis. In CNS, it is expressed in the perikaryon and proximal portion of the neuronal processes. Strong expression in the hippocampus, neuron-rich dendate granule cells, and pyramidal cell layers. Highly expressed in neurons of the cerebral cortex. Also expressed in the cerebellar cortex, deep cerebellar nuclei, thalamus, and basal ganglia.

Its subcellular location is the cell membrane. The protein localises to the sarcolemma. It localises to the cytoplasm. It is found in the cytoskeleton. In terms of biological role, adapter protein that binds to and probably organizes the subcellular localization of a variety of proteins. May link various receptors to the actin cytoskeleton and the dystrophin glycoprotein complex. The chain is Gamma-2-syntrophin (SNTG2) from Homo sapiens (Human).